The chain runs to 514 residues: Putative transposase y4uI (514 aa).

Positions 11-93 (VREILKLRLD…PDWSAVAREL (83 aa)) constitute an HTH IS408-type domain. Positions 128-317 (HGRLPLVMRQ…TRRALFDELD (190 aa)) constitute an Integrase catalytic domain.

The protein belongs to the transposase IS21/IS408/IS1162 family.

This is Putative transposase y4uI from Sinorhizobium fredii (strain NBRC 101917 / NGR234).